The primary structure comprises 868 residues: Phospholipase D delta (868 aa).

Residues 1–154 (MAEKVSEDVM…ASGERISGWF (154 aa)) form the C2 domain. D216 is a binding site for Ca(2+). The PLD phosphodiesterase 1 domain occupies 368 to 403 (TLFTHHQKCVLVDTQAVGNNRKVTAFIGGLDLCDGR). Active-site residues include H373, K375, and D380. Residue H373 coordinates a 1,2-diacyl-sn-glycero-3-phosphate. Ca(2+) contacts are provided by H409 and H440. Residues Q588 and H718 each coordinate a 1,2-diacyl-sn-glycero-3-phosphate. The PLD phosphodiesterase 2 domain occupies 713–740 (FMIYVHAKGMIVDDEYVLMGSANINQRS). Active-site residues include H718, K720, and D725. E781 contacts Ca(2+).

Belongs to the phospholipase D family. C2-PLD subfamily. Interacts with GAPC1 and GAPC2. Increased interaction in the presence of H(2)O(2). Ca(2+) is required as a cofactor. In terms of tissue distribution, expressed in roots, leaves, stems, siliques and flowers. Strongly expressed in the vascular tissues of cotyledons and leaves under dehydration stress conditions. Expression is higher in old leaves than in young leaves. Expressed in leaves and guard cells. The isoform 2 may not be present in siliques.

The protein resides in the cell membrane. The enzyme catalyses a 1,2-diacyl-sn-glycero-3-phosphocholine + H2O = a 1,2-diacyl-sn-glycero-3-phosphate + choline + H(+). Its activity is regulated as follows. Activated by free oleic acid in a dose-dependent manner and less effectively by other unsaturated fatty acids such as linoleic and linolenic acids. Not activated by the saturated fatty acids stearic and palmitic acids. PIP2 and Ca(2+) stimulate activity by promoting lipid substrate binding to the active site. Activated by H(2)O(2) and by binding to GAPC. Functionally, hydrolyzes glycerol-phospholipids at the terminal phosphodiesteric bond to generate phosphatidic acids (PA). May be involved in PA accumulation in the dehydration stress response and in the transduction of hormonal and environmental signals to the microtubules cytoskeleton. Prefers phosphatidylethanolamine to phosphatidylcholine as substrate. Involved in H(2)O(2) and abscisic acid (ABA)-induced stomatal closure. Involved in nitric oxide (NO) signaling during stomatal closure. Plays a positive role in ABA-promoted senescence. Involved in basal defense and nonhost resistance. This is Phospholipase D delta from Arabidopsis thaliana (Mouse-ear cress).